The following is a 456-amino-acid chain: N(6)-adenosine-methyltransferase non-catalytic subunit METTL14 (456 aa).

Over residues D39 to S51 the composition is skewed to basic and acidic residues. Positions D39–E74 are disordered. A compositionally biased stretch (polar residues) spans R52–V61. 2 interaction with METTL3 regions span residues R135–D136 and S237–G238. Positions R245–R254 are positively charged region required for RNA-binding. Interaction with METTL3 stretches follow at residues R255–D258 and K278–H287. Residues H297–R298 form a positively charged region required for RNA-binding region. The interaction with METTL3 stretch occupies residues N308–D312. Residues L395–R456 form a disordered region. Residues A410–A421 are compositionally biased toward gly residues. Residues R423–N441 show a composition bias toward basic and acidic residues.

This sequence belongs to the MT-A70-like family. Heterodimer; heterodimerizes with mettl3 to form an antiparallel heterodimer that constitutes an active methyltransferase. Component of the WMM complex, a N6-methyltransferase complex composed of a catalytic subcomplex, named MAC, and of an associated subcomplex, named MACOM. The MAC subcomplex is composed of mettl3 and mettl14.

It is found in the nucleus. The METTL3-METTL14 heterodimer forms a N6-methyltransferase complex that methylates adenosine residues at the N(6) position of some mRNAs and regulates the circadian clock, differentiation of embryonic stem cells and cortical neurogenesis. In the heterodimer formed with mettl3, mettl14 constitutes the RNA-binding scaffold that recognizes the substrate rather than the catalytic core. N6-methyladenosine (m6A), which takes place at the 5'-[AG]GAC-3' consensus sites of some mRNAs, plays a role in mRNA stability and processing. In Xenopus tropicalis (Western clawed frog), this protein is N(6)-adenosine-methyltransferase non-catalytic subunit METTL14 (mettl14).